Reading from the N-terminus, the 488-residue chain is Patatin-like protein 7 (488 aa).

Residues 23 to 49 (QRGGDGATAASKSANDYNNNDSLLTDM) form a disordered region. A compositionally biased stretch (polar residues) spans 32-47 (ASKSANDYNNNDSLLT). The 201-residue stretch at 101 to 301 (LSIDGGGMRG…AMSNPTAAAI (201 aa)) folds into the PNPLA domain. The short motif at 105–110 (GGGMRG) is the GXGXXG element. Ser145 serves as the catalytic Nucleophile.

The protein belongs to the patatin family. In terms of tissue distribution, highly expressed in roots and at lower levels in leaves, stems, flowers and siliques.

The protein localises to the cell membrane. Possesses non-specific lipolytic acyl hydrolase (LAH) activity. Catalyzes the hydrolysis of the galactolipids monogalactosyldiacylglycerol (MGDG) and digalactosyldiacylglycerol (DGDG), and the phoshpolipids phosphatidylcholine (PC), phosphatidylethanolamine (PE), phosphatidylglycerol (PG), phosphatidic acid (PA), phosphatidylserine (PS). Favors the release of fatty acid at the sn-2 position for PC. Possesses acyl-CoA thioesterase activity. Negatively affects disease resistance to the necrotic fungal pathogen Botrytis cinerea and the avirulent bacteria Pseudomonas syringae by promoting cell death and reducing the efficiency of the hypersensitive response, respectively. However, PLP2 contributes to resistance to cucumber mosaic virus (CMV), an obligate parasite inducing hypersensitive response. May negatively regulate oxylipin production, possibly via participating in membrane repair that includes removal of oxidatively modified lipids. Enzymatic products of PLP2 may influence cellulose content and cell elongation. This Arabidopsis thaliana (Mouse-ear cress) protein is Patatin-like protein 7 (PLP7).